A 574-amino-acid chain; its full sequence is Phosphate permease PHO89 (574 aa).

The Extracellular portion of the chain corresponds to 1-5 (MALHQ). The chain crosses the membrane as a helical span at residues 6–26 (FDYIFAIAMLFAFLDAFNIGA). The Cytoplasmic segment spans residues 27–43 (NDVANSFASSISSRSLK). A helical membrane pass occupies residues 44–64 (YWQAMVLAGLCEFLGAVLAGA). Residues 65–84 (RVSGTIKNNIIDSSIFTNDP) lie on the Extracellular side of the membrane. Residues 85-105 (AVLMLTMTSALIGSSCWLTFA) traverse the membrane as a helical segment. At 106-117 (TAIGMPVSTTHS) the chain is on the cytoplasmic side. A helical membrane pass occupies residues 118–138 (IVGGTIGAGIAAGGANGVVWG). At 139–145 (WSGVSQI) the chain is on the extracellular side. A helical transmembrane segment spans residues 146-166 (IASWFIAPILAGAIAAIVFSI). The Cytoplasmic portion of the chain corresponds to 167–184 (SRFSVLEVKSLERSIKNA). Residues 185–205 (LLLVGVLVFATFSILTMLIVW) traverse the membrane as a helical segment. Residues 206 to 222 (KGSPNLHLDDLSETETA) are Extracellular-facing. The chain crosses the membrane as a helical span at residues 223–243 (VSIVLTGAIASIVYFIFFYPF). Topologically, residues 244–354 (YRRKVLDQDW…SLLKQGPKKW (111 aa)) are cytoplasmic. A disordered region spans residues 301-332 (EDEENKAASNSNDSVKNKEDIQEVDLVRTETE). Basic and acidic residues predominate over residues 315 to 332 (VKNKEDIQEVDLVRTETE). Residues 355 to 375 (PLLFWLVISHGWTQDVIHAQV) form a helical membrane-spanning segment. Residues 376-398 (NDRDMLSGDLKGMYERSKFYDNR) lie on the Extracellular side of the membrane. The helical transmembrane segment at 399–419 (VEYIYSVLQAITAATMSFAHG) threads the bilayer. Topologically, residues 420-447 (ANDVANATGPLSAVYVIWKTNTIGAKSE) are cytoplasmic. Residues 448-468 (VPVWVLAYGGVALVIGCWTYG) traverse the membrane as a helical segment. Topologically, residues 469 to 503 (YNIIKNLGNKMILQSPSRGFSIELAVAITTVMATQ) are extracellular. Residues 504–524 (LGIPTSTTQIAVGGIVAVGLC) form a helical membrane-spanning segment. Residues 525 to 541 (NKDLKSVNWRMVAWCYS) lie on the Cytoplasmic side of the membrane. Residues 542–562 (GWFLTLPIAGLIAGIINGIIL) form a helical membrane-spanning segment. Topologically, residues 563–574 (NAPRFGVEYQMT) are extracellular.

It belongs to the inorganic phosphate transporter (PiT) (TC 2.A.20) family. In terms of assembly, forms homodimers and higher order homooligomers.

It is found in the cell membrane. It catalyses the reaction 2 Na(+)(out) + phosphate(out) = 2 Na(+)(in) + phosphate(in). With respect to regulation, weakly stimulated by Li(+) and K(+). Inhibited by monensin. Inhibited by phosphonoacetic acid. Inhibited by methylphosphonate. Inhibited by dimethylphosphonate. Functionally, sodium-phosphate symporter. Active in early growth phase. The protein is Phosphate permease PHO89 (PHO89) of Saccharomyces cerevisiae (strain ATCC 204508 / S288c) (Baker's yeast).